The chain runs to 427 residues: UPF0229 protein KPN78578_11640 (427 aa).

The segment at 72–109 (RNRVHPGNDHFVQNDRIERPQGGGGGGGSGQGQASADG) is disordered. A compositionally biased stretch (basic and acidic residues) spans 77 to 90 (PGNDHFVQNDRIER). Residues 92-102 (QGGGGGGGSGQ) show a composition bias toward gly residues.

It belongs to the UPF0229 family.

The polypeptide is UPF0229 protein KPN78578_11640 (Klebsiella pneumoniae subsp. pneumoniae (strain ATCC 700721 / MGH 78578)).